Reading from the N-terminus, the 499-residue chain is Cytochrome P450 2M1 (499 aa).

Residue Cys441 participates in heme binding.

It belongs to the cytochrome P450 family. The cofactor is heme. As to expression, in kidney and in liver from juvenile and sexually mature trout from both sexes.

Its subcellular location is the endoplasmic reticulum membrane. The protein resides in the microsome membrane. The enzyme catalyses an organic molecule + reduced [NADPH--hemoprotein reductase] + O2 = an alcohol + oxidized [NADPH--hemoprotein reductase] + H2O + H(+). In terms of biological role, has (omega-6)-hydroxylation activity toward lauric acid. This is Cytochrome P450 2M1 (cyp2m1) from Oncorhynchus mykiss (Rainbow trout).